Here is a 141-residue protein sequence, read N- to C-terminus: Ribonuclease P protein component (141 aa).

The protein belongs to the RnpA family. Consists of a catalytic RNA component (M1 or rnpB) and a protein subunit.

It catalyses the reaction Endonucleolytic cleavage of RNA, removing 5'-extranucleotides from tRNA precursor.. RNaseP catalyzes the removal of the 5'-leader sequence from pre-tRNA to produce the mature 5'-terminus. It can also cleave other RNA substrates such as 4.5S RNA. The protein component plays an auxiliary but essential role in vivo by binding to the 5'-leader sequence and broadening the substrate specificity of the ribozyme. The chain is Ribonuclease P protein component from Onion yellows phytoplasma (strain OY-M).